The sequence spans 84 residues: MATGTDQAVGFGLVAVSLIIFTYYTTWVILLPFIDSQHVIHKYFLPRAYAVLLPLAAGLLLLLFVGLFITYVMLKSQKITKKAQ.

2 helical membrane-spanning segments follow: residues 11–31 (FGLV…VILL) and 49–69 (YAVL…GLFI).

The protein belongs to the DPM2 family. As to quaternary structure, component of the dolichol-phosphate mannose (DPM) synthase complex composed of DPM1, DPM2 and DPM3; in the complex interacts directly with DPM3. Component of the glycosylphosphatidylinositol-N-acetylglucosaminyltransferase (GPI-GnT) complex composed at least by PIGA, PIGC, PIGH, PIGP, PIGQ, PIGY and DPM2. Interacts with PIGA, PIGC and PIGQ.

The protein resides in the endoplasmic reticulum membrane. It functions in the pathway protein modification; protein glycosylation. Regulates the biosynthesis of dolichol phosphate-mannose. Regulatory subunit of the dolichol-phosphate mannose (DPM) synthase complex; essential for the ER localization and stable expression of DPM1. Part of the glycosylphosphatidylinositol-N-acetylglucosaminyltransferase (GPI-GnT) complex that catalyzes the transfer of N-acetylglucosamine from UDP-N-acetylglucosamine to phosphatidylinositol and participates in the first step of GPI biosynthesis. May act by regulating the GPI-GNT complex. The polypeptide is Dolichol phosphate-mannose biosynthesis regulatory protein (Mus musculus (Mouse)).